The chain runs to 177 residues: Adenine phosphoribosyltransferase (177 aa).

The protein belongs to the purine/pyrimidine phosphoribosyltransferase family. In terms of assembly, homodimer.

The protein localises to the cytoplasm. The enzyme catalyses AMP + diphosphate = 5-phospho-alpha-D-ribose 1-diphosphate + adenine. It functions in the pathway purine metabolism; AMP biosynthesis via salvage pathway; AMP from adenine: step 1/1. Its function is as follows. Catalyzes a salvage reaction resulting in the formation of AMP, that is energically less costly than de novo synthesis. The chain is Adenine phosphoribosyltransferase from Chlorobium luteolum (strain DSM 273 / BCRC 81028 / 2530) (Pelodictyon luteolum).